The sequence spans 363 residues: S-adenosylmethionine:tRNA ribosyltransferase-isomerase (363 aa).

Belongs to the QueA family. As to quaternary structure, monomer.

It localises to the cytoplasm. The enzyme catalyses 7-aminomethyl-7-carbaguanosine(34) in tRNA + S-adenosyl-L-methionine = epoxyqueuosine(34) in tRNA + adenine + L-methionine + 2 H(+). Its pathway is tRNA modification; tRNA-queuosine biosynthesis. Functionally, transfers and isomerizes the ribose moiety from AdoMet to the 7-aminomethyl group of 7-deazaguanine (preQ1-tRNA) to give epoxyqueuosine (oQ-tRNA). In Haemophilus influenzae (strain PittEE), this protein is S-adenosylmethionine:tRNA ribosyltransferase-isomerase.